The primary structure comprises 118 residues: Small ribosomal subunit protein uS13 (118 aa).

Residues 91-118 (HRRGLPVRGQRTKTNARTRKGPRKPIKK) are disordered.

This sequence belongs to the universal ribosomal protein uS13 family. In terms of assembly, part of the 30S ribosomal subunit. Forms a loose heterodimer with protein S19. Forms two bridges to the 50S subunit in the 70S ribosome.

Located at the top of the head of the 30S subunit, it contacts several helices of the 16S rRNA. In the 70S ribosome it contacts the 23S rRNA (bridge B1a) and protein L5 of the 50S subunit (bridge B1b), connecting the 2 subunits; these bridges are implicated in subunit movement. Contacts the tRNAs in the A and P-sites. This is Small ribosomal subunit protein uS13 from Pectobacterium atrosepticum (strain SCRI 1043 / ATCC BAA-672) (Erwinia carotovora subsp. atroseptica).